The sequence spans 185 residues: Neuronal vesicle trafficking-associated protein 1 (185 aa).

At 1–82 (MVKLGNNFAE…ITEGVTERFK (82 aa)) the chain is on the cytoplasmic side. The helical; Signal-anchor for type II membrane protein transmembrane segment at 83–103 (VSVLVLFALAFLTCVVFLVVY) threads the bilayer. Topologically, residues 104 to 185 (KVYKYDRACP…QETEAAEKSA (82 aa)) are lumenal. The segment at 129–164 (ESYYTEQDSSAREKFYTVINHYNLAKQSITRSVSPW) is required for GRIP1 interaction.

This sequence belongs to the NSG family. In terms of assembly, forms a complex with GRIP1, GRIA2 and STX12; controls the intracellular fate of AMPAR and the endosomal sorting of the GRIA2 subunit toward recycling and membrane targeting. Interacts with GRIP1. Interacts with STX12. Interacts with APP; could regulate APP processing. Interacts with FAM171A1. As to expression, widely expressed in brain and spinal cord. Expressed in neurons during maturation and synapse formation.

It is found in the membrane. The protein localises to the golgi apparatus. The protein resides in the trans-Golgi network membrane. Its subcellular location is the endosome membrane. It localises to the cell projection. It is found in the dendrite. The protein localises to the early endosome membrane. The protein resides in the late endosome membrane. Its subcellular location is the lysosome lumen. It localises to the recycling endosome membrane. It is found in the cytoplasmic vesicle membrane. The protein localises to the golgi stack membrane. The protein resides in the endosome. Its subcellular location is the multivesicular body membrane. It localises to the endoplasmic reticulum membrane. Functionally, plays a role in the recycling mechanism in neurons of multiple receptors, including AMPAR, APP and L1CAM and acts at the level of early endosomes to promote sorting of receptors toward a recycling pathway. Regulates sorting and recycling of GRIA2 through interaction with GRIP1 and then contributes to the regulation of synaptic transmission and plasticity by affecting the recycling and targeting of AMPA receptors to the synapse. Is required for faithful sorting of L1CAM to axons by facilitating trafficking from somatodendritic early endosome or the recycling endosome. In an other hand, induces apoptosis via the activation of CASP3 in response to DNA damage. This is Neuronal vesicle trafficking-associated protein 1 from Rattus norvegicus (Rat).